Consider the following 518-residue polypeptide: Protein nucleotidyltransferase YdiU (518 aa).

Residues Gly109, Gly111, Arg112, Lys131, Asp143, Gly144, Arg194, and Arg201 each contribute to the ATP site. Catalysis depends on Asp270, which acts as the Proton acceptor. Mg(2+)-binding residues include Asn271 and Asp280. ATP is bound at residue Asp280.

It belongs to the SELO family. It depends on Mg(2+) as a cofactor. The cofactor is Mn(2+).

The catalysed reaction is L-seryl-[protein] + ATP = 3-O-(5'-adenylyl)-L-seryl-[protein] + diphosphate. It carries out the reaction L-threonyl-[protein] + ATP = 3-O-(5'-adenylyl)-L-threonyl-[protein] + diphosphate. It catalyses the reaction L-tyrosyl-[protein] + ATP = O-(5'-adenylyl)-L-tyrosyl-[protein] + diphosphate. The enzyme catalyses L-histidyl-[protein] + UTP = N(tele)-(5'-uridylyl)-L-histidyl-[protein] + diphosphate. The catalysed reaction is L-seryl-[protein] + UTP = O-(5'-uridylyl)-L-seryl-[protein] + diphosphate. It carries out the reaction L-tyrosyl-[protein] + UTP = O-(5'-uridylyl)-L-tyrosyl-[protein] + diphosphate. Nucleotidyltransferase involved in the post-translational modification of proteins. It can catalyze the addition of adenosine monophosphate (AMP) or uridine monophosphate (UMP) to a protein, resulting in modifications known as AMPylation and UMPylation. The polypeptide is Protein nucleotidyltransferase YdiU (Paraburkholderia xenovorans (strain LB400)).